We begin with the raw amino-acid sequence, 404 residues long: Histidinol dehydrogenase (404 aa).

3 residues coordinate NAD(+): tyrosine 114, glutamine 176, and asparagine 199. Residues serine 222, glutamine 244, and histidine 247 each coordinate substrate. Positions 244 and 247 each coordinate Zn(2+). Residues glutamate 300 and histidine 301 each act as proton acceptor in the active site. Substrate contacts are provided by histidine 301, aspartate 334, glutamate 388, and histidine 393. Aspartate 334 serves as a coordination point for Zn(2+). Histidine 393 is a Zn(2+) binding site.

It belongs to the histidinol dehydrogenase family. Zn(2+) is required as a cofactor.

It catalyses the reaction L-histidinol + 2 NAD(+) + H2O = L-histidine + 2 NADH + 3 H(+). It participates in amino-acid biosynthesis; L-histidine biosynthesis; L-histidine from 5-phospho-alpha-D-ribose 1-diphosphate: step 9/9. Functionally, catalyzes the sequential NAD-dependent oxidations of L-histidinol to L-histidinaldehyde and then to L-histidine. In Archaeoglobus fulgidus (strain ATCC 49558 / DSM 4304 / JCM 9628 / NBRC 100126 / VC-16), this protein is Histidinol dehydrogenase (hisD).